A 427-amino-acid polypeptide reads, in one-letter code: Protein king tubby 1 (427 aa).

Positions 48–174 (SPSNPDQIIS…ASGHNDAEGD (127 aa)) are disordered. The segment covering 57-86 (SSSGSPTTVTATGTGTTTTTGSVTTTPTSP) has biased composition (low complexity).

The protein belongs to the TUB family.

Its subcellular location is the cytoplasm. The protein localises to the nucleus. The sequence is that of Protein king tubby 1 (king-tubby1) from Culex quinquefasciatus (Southern house mosquito).